We begin with the raw amino-acid sequence, 618 residues long: V-type proton ATPase catalytic subunit A (618 aa).

Position 251 to 258 (G251 to T258) interacts with ATP.

The protein belongs to the ATPase alpha/beta chains family. In terms of assembly, V-ATPase is a heteromultimeric enzyme composed of a peripheral catalytic V1 complex (main components: subunits A, B, C, D, E, and F) attached to an integral membrane V0 proton pore complex (main component: the proteolipid protein).

It carries out the reaction ATP + H2O + 4 H(+)(in) = ADP + phosphate + 5 H(+)(out). Catalytic subunit of the peripheral V1 complex of vacuolar ATPase. V-ATPase vacuolar ATPase is responsible for acidifying a variety of intracellular compartments in eukaryotic cells. This is V-type proton ATPase catalytic subunit A (vatA) from Dictyostelium discoideum (Social amoeba).